A 642-amino-acid chain; its full sequence is 4-hydroxy-3-methylbut-2-enyl diphosphate reductase (642 aa).

Positions 1-282 (MRKVMLAEKA…EEAISKMSEN (282 aa)) are 4-hydroxy-3-methylbut-2-enyl diphosphate reductase. Cys-13 is a [4Fe-4S] cluster binding site. Residues His-42 and His-77 each coordinate (2E)-4-hydroxy-3-methylbut-2-enyl diphosphate. His-42 and His-77 together coordinate dimethylallyl diphosphate. The isopentenyl diphosphate site is built by His-42 and His-77. Cys-99 contributes to the [4Fe-4S] cluster binding site. His-127 is a (2E)-4-hydroxy-3-methylbut-2-enyl diphosphate binding site. His-127 is a dimethylallyl diphosphate binding site. Residue His-127 participates in isopentenyl diphosphate binding. The active-site Proton donor is Glu-129. Residue Thr-165 participates in (2E)-4-hydroxy-3-methylbut-2-enyl diphosphate binding. A [4Fe-4S] cluster-binding site is contributed by Cys-193. Ser-221, Ser-222, Asn-223, and Ser-266 together coordinate (2E)-4-hydroxy-3-methylbut-2-enyl diphosphate. 4 residues coordinate dimethylallyl diphosphate: Ser-221, Ser-222, Asn-223, and Ser-266. Residues Ser-221, Ser-222, Asn-223, and Ser-266 each coordinate isopentenyl diphosphate. S1 motif domains are found at residues 309-377 (GASV…LSVK), 484-552 (GQVV…LSVK), and 569-638 (GSVV…LSIR).

This sequence in the N-terminal section; belongs to the IspH family. Requires [4Fe-4S] cluster as cofactor.

The catalysed reaction is isopentenyl diphosphate + 2 oxidized [2Fe-2S]-[ferredoxin] + H2O = (2E)-4-hydroxy-3-methylbut-2-enyl diphosphate + 2 reduced [2Fe-2S]-[ferredoxin] + 2 H(+). It catalyses the reaction dimethylallyl diphosphate + 2 oxidized [2Fe-2S]-[ferredoxin] + H2O = (2E)-4-hydroxy-3-methylbut-2-enyl diphosphate + 2 reduced [2Fe-2S]-[ferredoxin] + 2 H(+). It functions in the pathway isoprenoid biosynthesis; dimethylallyl diphosphate biosynthesis; dimethylallyl diphosphate from (2E)-4-hydroxy-3-methylbutenyl diphosphate: step 1/1. The protein operates within isoprenoid biosynthesis; isopentenyl diphosphate biosynthesis via DXP pathway; isopentenyl diphosphate from 1-deoxy-D-xylulose 5-phosphate: step 6/6. Catalyzes the conversion of 1-hydroxy-2-methyl-2-(E)-butenyl 4-diphosphate (HMBPP) into a mixture of isopentenyl diphosphate (IPP) and dimethylallyl diphosphate (DMAPP). Acts in the terminal step of the DOXP/MEP pathway for isoprenoid precursor biosynthesis. The sequence is that of 4-hydroxy-3-methylbut-2-enyl diphosphate reductase from Clostridium acetobutylicum (strain ATCC 824 / DSM 792 / JCM 1419 / IAM 19013 / LMG 5710 / NBRC 13948 / NRRL B-527 / VKM B-1787 / 2291 / W).